A 367-amino-acid polypeptide reads, in one-letter code: Alpha-2-HS-glycoprotein (367 aa).

A signal peptide spans 1-18 (MKSLVLLLCLAQLWGCHS). In terms of domain architecture, Cystatin fetuin-A-type 1 spans 27–133 (YRQPNCDDPE…KFSVVYAKCD (107 aa)). 6 disulfide bridges follow: Cys-32–Cys-358, Cys-89–Cys-100, Cys-114–Cys-132, Cys-146–Cys-149, Cys-208–Cys-219, and Cys-230–Cys-247. Phosphoserine occurs at positions 134, 135, and 138. The Cystatin fetuin-A-type 2 domain maps to 144–255 (KVCQDCPLLA…TCTVFQTQPV (112 aa)). N-linked (GlcNAc...) asparagine glycosylation is found at Asn-156 and Asn-176. A disordered region spans residues 254 to 301 (PVTSQPQPEGANETVPTPVVDPDAPPSPPLGAPGLPPAGSPPDSHVLL). The N-linked (GlcNAc...) asparagine glycan is linked to Asn-265. Over residues 276 to 293 (DAPPSPPLGAPGLPPAGS) the composition is skewed to pro residues. The propeptide at 301 to 340 (LAAPPGHQLHWAHYDLRHTFMGVVSLGSPSGEASHPRKTR) is connecting peptide. Residue Thr-319 is modified to Phosphothreonine. 3 positions are modified to phosphoserine: Ser-325, Ser-328, and Ser-330. The O-linked (GalNAc...) threonine glycan is linked to Thr-339.

Belongs to the fetuin family. As to quaternary structure, alpha-2-HS glycoprotein derives from this precursor, when the connecting peptide is cleaved off. The two chains A and B are held together by a single disulfide bond. Post-translationally, phosphorylated by FAM20C in the extracellular medium.

The protein resides in the secreted. In terms of biological role, promotes endocytosis, possesses opsonic properties and influences the mineral phase of bone. Shows affinity for calcium and barium ions. The protein is Alpha-2-HS-glycoprotein (AHSG) of Pan troglodytes (Chimpanzee).